The sequence spans 123 residues: MWVGLGGGVGSLGRWWIGRIVGEYHHGAFPLGTFLINISGAFVIGYLSVLFGVDWHDRYGTMLNAGVLTGILGGYTTFSSMQLDAVKLSHKGQGGLAVFYLVASVLSGLFAAWLGAMLAHLQG.

3 consecutive transmembrane segments (helical) span residues 33-53, 59-79, and 98-118; these read TFLI…LFGV, YGTM…TTFS, and VFYL…GAML. Residues glycine 73 and threonine 76 each contribute to the Na(+) site.

This sequence belongs to the fluoride channel Fluc/FEX (TC 1.A.43) family.

The protein resides in the cell inner membrane. It carries out the reaction fluoride(in) = fluoride(out). Its activity is regulated as follows. Na(+) is not transported, but it plays an essential structural role and its presence is essential for fluoride channel function. Fluoride-specific ion channel. Important for reducing fluoride concentration in the cell, thus reducing its toxicity. This chain is Fluoride-specific ion channel FluC 1, found in Brucella melitensis biotype 1 (strain ATCC 23456 / CCUG 17765 / NCTC 10094 / 16M).